We begin with the raw amino-acid sequence, 199 residues long: V-type proton ATPase subunit E (199 aa).

It belongs to the V-ATPase E subunit family.

In terms of biological role, produces ATP from ADP in the presence of a proton gradient across the membrane. This is V-type proton ATPase subunit E from Clostridium botulinum (strain 657 / Type Ba4).